The primary structure comprises 206 residues: Guanylate kinase (206 aa).

The region spanning P13–S193 is the Guanylate kinase-like domain. Residue G20–D27 coordinates ATP.

Belongs to the guanylate kinase family.

Its subcellular location is the cytoplasm. It catalyses the reaction GMP + ATP = GDP + ADP. In terms of biological role, essential for recycling GMP and indirectly, cGMP. The protein is Guanylate kinase of Dehalococcoides mccartyi (strain ATCC BAA-2266 / KCTC 15142 / 195) (Dehalococcoides ethenogenes (strain 195)).